Reading from the N-terminus, the 717-residue chain is MAPERHPPAFEGAGQESGLQVWRVERLELVPVPPSRHGDFFVGDAYLVLHTVRRGAAVAYRLHYWLGKECTQDESTAAAIFTVQLDDYLGGKPVQSREIQGYESNEFVSYFKGGIKYKAGGVASGFNHVVTNDLSAQRLLHIKGRRVVRATEVPLTWASFNKGDCFIIDLGNEIYQWCGSSCNKYERLKATQVAVGIRDNERNGRSRLITVEEGSEPDELITVLGEKPELPECSDDDDEMADIANRKSAKLYMVSDASGSMKLSVVAEENPFSMAMLLSEECFILDNGAARKIFVWKGKDANPQERKAAMKNAETFVQQMNYPANTQIQVLPEGGETPIFKQFFKDWKDKDQSDGFGKVYVTERVAKIEQIEFDATKLHESPQMAAQHNMIDDGSGKVQIWRVESSGRVPVEPETYGQFYGGDCYIILYTYPKGQIIYTWQGACATKDELTASAFLTVQLDRSLNDQAVQIRVSQGKEPPHLLSLFKNKPLIVYKNGTSKKEGQKPAPPTRLFQIRRNLMSVTRIAEVDVDAMSLNSNDAFVLKLPNNTGYTWVGKGVNKEEEQGAQYIASVLKCQTAKINEGQEPEEFWKALGGKKKYQTSSQLLTKAEDHPPRLFGCSNKTGRFIIEEVPGEFTQDDLAEDDVMLLDAWEQVFVWIGKEANETERQESVKSAKRYIETDPSGRDKGTPIVIVKQGHEPPTFTGWFLAWDSNKWKN.

Residues 1-363 (MAPERHPPAF…DGFGKVYVTE (363 aa)) are actin-severing. The Gelsolin-like 1 repeat unit spans residues 28-108 (ELVPVPPSRH…IQGYESNEFV (81 aa)). Residues 112–119 (KGGIKYKA) and 138–146 (RLLHIKGRR) contribute to the a 1,2-diacyl-sn-glycero-3-phospho-(1D-myo-inositol-4,5-bisphosphate) site. 5 Gelsolin-like repeats span residues 148-220 (VRAT…PDEL), 265-340 (VVAE…TPIF), 408-483 (RVPV…PHLL), 526-590 (AEVD…EEFW), and 628-703 (IEEV…PPTF). The segment at 364–715 (RVAKIEQIEF…WFLAWDSNKW (352 aa)) is ca(2+)-dependent actin binding. Residues N538, D539, E562, D643, D644, and E666 each coordinate Ca(2+).

Belongs to the villin/gelsolin family.

Its subcellular location is the cytoplasm. It is found in the cytoskeleton. The protein resides in the cell projection. The protein localises to the podosome. Ca(2+)-dependent actin filament-severing protein that has a regulatory function in exocytosis by affecting the organization of the microfilament network underneath the plasma membrane. In vitro, also has barbed end capping and nucleating activities in the presence of Ca(2+). Severing activity is inhibited by phosphatidylinositol 4,5-bis-phosphate (PIP2). Required for megakaryocyte differentiation, maturation, polyploidization and apoptosis with the release of platelet-like particles. Plays a role in osteoclastogenesis (OCG) and actin cytoskeletal organization in osteoclasts. Regulates chondrocyte proliferation and differentiation. Inhibits cell proliferation and tumorigenesis. Signaling is mediated by MAPK, p38 and JNK pathways. The polypeptide is Scinderin (SCIN) (Gallus gallus (Chicken)).